The following is a 614-amino-acid chain: Syringomycin synthase SyrB1 (614 aa).

A Carrier domain is found at 535–610 (KGLSEQEHFV…VLADHITRSL (76 aa)). Position 570 is an O-(pantetheine 4'-phosphoryl)serine (S570).

The protein belongs to the ATP-dependent AMP-binding enzyme family. Pantetheine 4'-phosphate serves as cofactor.

The enzyme catalyses holo-[peptidyl-carrier protein] + L-threonine + ATP = L-threonyl-[peptidyl-carrier protein] + AMP + diphosphate. In terms of biological role, involved in the biosynthesis of syringomycin E, a cyclic lipodepsinonapeptide toxin with phytotoxic activity. Specifically adenylates L-threonine and loads it onto its peptidyl carrier domain, via a thioester linkage to the phosphopanthetheine moiety. Is highly specific for L-threonine. This is Syringomycin synthase SyrB1 from Pseudomonas syringae pv. syringae.